The chain runs to 54 residues: SPbeta prophage-derived uncharacterized protein YoqE (54 aa).

This Bacillus subtilis (strain 168) protein is SPbeta prophage-derived uncharacterized protein YoqE (yoqE).